The sequence spans 440 residues: Dihydrolipoyllysine-residue acetyltransferase component of pyruvate dehydrogenase complex (440 aa).

A Lipoyl-binding domain is found at 2–78; that stretch reads SIEVKMPALS…AVGQVIAVMA (77 aa). Position 43 is an N6-lipoyllysine (Lys-43). Residues 91–113 form a disordered region; that stretch reads ASSQISEPSEKADVAQKETADSE. Positions 98–110 are enriched in basic and acidic residues; sequence PSEKADVAQKETA. Positions 149 to 186 constitute a Peripheral subunit-binding (PSBD) domain; sequence KASPLAKRLAKKNHVDLKQVNGSGPHGRIIKADIEAFI. Positions 192-202 are enriched in polar residues; it reads ASSNPSVSTPE. Residues 192–214 form a disordered region; sequence ASSNPSVSTPEASGKITHDTPHN. Residue His-412 is part of the active site.

This sequence belongs to the 2-oxoacid dehydrogenase family. As to quaternary structure, forms a 24-polypeptide structural core with octahedral symmetry. It depends on (R)-lipoate as a cofactor.

It catalyses the reaction N(6)-[(R)-dihydrolipoyl]-L-lysyl-[protein] + acetyl-CoA = N(6)-[(R)-S(8)-acetyldihydrolipoyl]-L-lysyl-[protein] + CoA. Its function is as follows. The pyruvate dehydrogenase complex catalyzes the overall conversion of pyruvate to acetyl-CoA and CO(2). It contains multiple copies of three enzymatic components: pyruvate dehydrogenase (E1), dihydrolipoamide acetyltransferase (E2) and lipoamide dehydrogenase (E3). The polypeptide is Dihydrolipoyllysine-residue acetyltransferase component of pyruvate dehydrogenase complex (pdhC) (Zymomonas mobilis subsp. mobilis (strain ATCC 31821 / ZM4 / CP4)).